Consider the following 106-residue polypeptide: Toxin-like structure LSTX-D3 (106 aa).

The N-terminal stretch at 1-20 is a signal peptide; sequence MMKVLVVVALLVTLISYSSS. Positions 21-41 are excised as a propeptide; sequence EGIDDLEADELLSLMANEQTR. 4 disulfide bridges follow: Cys-45–Cys-60, Cys-52–Cys-69, Cys-59–Cys-85, and Cys-71–Cys-83.

This sequence belongs to the neurotoxin 19 (CSTX) family. 02 (D7) subfamily. In terms of tissue distribution, expressed by the venom gland.

It localises to the secreted. This is Toxin-like structure LSTX-D3 from Lycosa singoriensis (Wolf spider).